A 564-amino-acid polypeptide reads, in one-letter code: Dihydroxy-acid dehydratase (564 aa).

C51 is a [2Fe-2S] cluster binding site. D83 is a binding site for Mg(2+). C124 provides a ligand contact to [2Fe-2S] cluster. Mg(2+)-binding residues include D125 and K126. At K126 the chain carries N6-carboxylysine. C196 contacts [2Fe-2S] cluster. Mg(2+) is bound at residue E448. S474 acts as the Proton acceptor in catalysis.

Belongs to the IlvD/Edd family. In terms of assembly, homodimer. Requires [2Fe-2S] cluster as cofactor. It depends on Mg(2+) as a cofactor.

It catalyses the reaction (2R)-2,3-dihydroxy-3-methylbutanoate = 3-methyl-2-oxobutanoate + H2O. It carries out the reaction (2R,3R)-2,3-dihydroxy-3-methylpentanoate = (S)-3-methyl-2-oxopentanoate + H2O. It participates in amino-acid biosynthesis; L-isoleucine biosynthesis; L-isoleucine from 2-oxobutanoate: step 3/4. It functions in the pathway amino-acid biosynthesis; L-valine biosynthesis; L-valine from pyruvate: step 3/4. Functions in the biosynthesis of branched-chain amino acids. Catalyzes the dehydration of (2R,3R)-2,3-dihydroxy-3-methylpentanoate (2,3-dihydroxy-3-methylvalerate) into 2-oxo-3-methylpentanoate (2-oxo-3-methylvalerate) and of (2R)-2,3-dihydroxy-3-methylbutanoate (2,3-dihydroxyisovalerate) into 2-oxo-3-methylbutanoate (2-oxoisovalerate), the penultimate precursor to L-isoleucine and L-valine, respectively. The sequence is that of Dihydroxy-acid dehydratase from Polynucleobacter asymbioticus (strain DSM 18221 / CIP 109841 / QLW-P1DMWA-1) (Polynucleobacter necessarius subsp. asymbioticus).